Reading from the N-terminus, the 438-residue chain is MKPLHYTASALALGLALMGNAQAVTTIPFWHSMEGELGKEVDSLAQRFNAENPDYKIVPTYKGNYEQNLSAGIAAFRTGNAPAILQVYEVGTATMMASKAIQPVYDVFKEAGIQFDESQFVPTVSGYYSDSKTGHLLSQPFNSSTPVLYYNKDAFKKAGLDPEQPPKTWQDLADYAAKLKASGMKCGYASGWQGRIQLENFSAWNGLPFASKNNGFDGTDAVLEFNKPEQVKHIAMLEEMNKKGDFSYVGRKDESTEKFYNGDCAMTTASSGSLANIREYAKFNYGVGMMPYDADAKDAPQNAIIGGASLWVMQGKDKETYTGVAKFLDFLAKPENAAEWHQKTGYLPITKAAYDLTREQGFYEKNPGADTATRQMLNKPPLPFTKGLRLGNMPQIRVIVDEELESVWTGKKTPQQALDTAVERGNQLLRRFEKSTKS.

A signal peptide spans 1–23; sequence MKPLHYTASALALGLALMGNAQA. 7 residues coordinate sn-glycerol 3-phosphate: Tyr65, Glu89, Ser144, Ser270, Gly307, Tyr346, and Arg397.

Belongs to the bacterial solute-binding protein 1 family. The complex is composed of two ATP-binding proteins (UgpC), two transmembrane proteins (UgpA and UgpE) and a solute-binding protein (UgpB).

The protein localises to the periplasm. Part of the ABC transporter complex UgpBAEC involved in sn-glycerol-3-phosphate (G3P) import. Binds G3P. The protein is sn-glycerol-3-phosphate-binding periplasmic protein UgpB (ugpB) of Shigella dysenteriae serotype 1 (strain Sd197).